The chain runs to 317 residues: Electron transfer flavoprotein subunit alpha (317 aa).

It belongs to the ETF alpha-subunit/FixB family. As to quaternary structure, heterodimer of an alpha and a beta subunit. The cofactor is FAD.

The protein resides in the cytoplasm. It functions in the pathway lipid metabolism; butanoate metabolism. Part of an electron transfer flavoprotein involved in syntrophic growth of S.wolfei with butyrate. Probably receives electrons from butyryl-CoA dehydrogenases, and transfers them to the membrane-bound quinone oxidoreductase Swol_0698. The chain is Electron transfer flavoprotein subunit alpha from Syntrophomonas wolfei subsp. wolfei (strain DSM 2245B / Goettingen).